The primary structure comprises 320 residues: Ferrochelatase (320 aa).

2 residues coordinate Fe cation: histidine 194 and glutamate 275.

It belongs to the ferrochelatase family. In terms of assembly, monomer.

Its subcellular location is the cytoplasm. It carries out the reaction heme b + 2 H(+) = protoporphyrin IX + Fe(2+). It functions in the pathway porphyrin-containing compound metabolism; protoheme biosynthesis; protoheme from protoporphyrin-IX: step 1/1. Functionally, catalyzes the ferrous insertion into protoporphyrin IX. The sequence is that of Ferrochelatase from Shigella boydii serotype 4 (strain Sb227).